The chain runs to 286 residues: Movement protein (286 aa).

Belongs to the tenuiviruses pc4 protein family. As to quaternary structure, interacts with the rice proteins DJA6 and HSP17.9A.

It localises to the host cytoplasm. Transports viral genome to neighboring plant cells directly through plasmosdesmata, without any budding. The movement protein allows efficient cell to cell propagation, by bypassing the host cell wall barrier. This is Movement protein from Avena sativa (Oat).